The chain runs to 72 residues: MAKSDVIEVEGKVTETLPNAMFRVELENGHEILAHVSGKIRMHYIRILPGDRVTVEMSPYDLSKGRITYRFK.

The S1-like domain occupies 1–72 (MAKSDVIEVE…SKGRITYRFK (72 aa)).

Belongs to the IF-1 family. In terms of assembly, component of the 30S ribosomal translation pre-initiation complex which assembles on the 30S ribosome in the order IF-2 and IF-3, IF-1 and N-formylmethionyl-tRNA(fMet); mRNA recruitment can occur at any time during PIC assembly.

It is found in the cytoplasm. Its function is as follows. One of the essential components for the initiation of protein synthesis. Stabilizes the binding of IF-2 and IF-3 on the 30S subunit to which N-formylmethionyl-tRNA(fMet) subsequently binds. Helps modulate mRNA selection, yielding the 30S pre-initiation complex (PIC). Upon addition of the 50S ribosomal subunit IF-1, IF-2 and IF-3 are released leaving the mature 70S translation initiation complex. The chain is Translation initiation factor IF-1 from Levilactobacillus brevis (strain ATCC 367 / BCRC 12310 / CIP 105137 / JCM 1170 / LMG 11437 / NCIMB 947 / NCTC 947) (Lactobacillus brevis).